The primary structure comprises 521 residues: uncharacterized protein (521 aa).

The stretch at 14-41 (QFQQMQHQMQQQQQQQMQQQQQQQQQQQ) forms a coiled coil. Composition is skewed to low complexity over residues 238–266 (LSGS…TSSS), 275–353 (SSTS…NNNN), and 423–482 (PRLS…PNNP). Disordered stretches follow at residues 238-357 (LSGS…ISGF) and 413-491 (TAVA…SNNG).

This is an uncharacterized protein from Dictyostelium discoideum (Social amoeba).